The primary structure comprises 273 residues: Phosphate import ATP-binding protein PstB 1 (273 aa).

One can recognise an ABC transporter domain in the interval 27–268; it reads ISIEHLSLYY…PLKKQTEDYI (242 aa). 59–66 serves as a coordination point for ATP; it reads GPSGCGKS.

It belongs to the ABC transporter superfamily. Phosphate importer (TC 3.A.1.7) family. The complex is composed of two ATP-binding proteins (PstB), two transmembrane proteins (PstC and PstA) and a solute-binding protein (PstS).

The protein resides in the cell inner membrane. The enzyme catalyses phosphate(out) + ATP + H2O = ADP + 2 phosphate(in) + H(+). In terms of biological role, part of the ABC transporter complex PstSACB involved in phosphate import. Responsible for energy coupling to the transport system. The protein is Phosphate import ATP-binding protein PstB 1 of Vibrio cholerae serotype O1 (strain ATCC 39315 / El Tor Inaba N16961).